A 335-amino-acid chain; its full sequence is 5-formaminoimidazole-4-carboxamide-1-(beta)-D-ribofuranosyl 5'-monophosphate synthetase (335 aa).

The 5-amino-1-(5-phospho-beta-D-ribosyl)imidazole-4-carboxamide site is built by His-21 and Ser-86. The ATP-grasp domain occupies 107-315; the sequence is RELLRWEADQ…YFDKPMDMGE (209 aa). ATP contacts are provided by residues 137-189 and Glu-211; that span reads PTEV…VPAY. Asn-231 lines the 5-amino-1-(5-phospho-beta-D-ribosyl)imidazole-4-carboxamide pocket. Mg(2+)-binding residues include Glu-270 and Glu-283.

Belongs to the phosphohexose mutase family. Mg(2+) serves as cofactor. It depends on Mn(2+) as a cofactor.

The enzyme catalyses 5-amino-1-(5-phospho-beta-D-ribosyl)imidazole-4-carboxamide + formate + ATP = 5-formamido-1-(5-phospho-D-ribosyl)imidazole-4-carboxamide + ADP + phosphate. It functions in the pathway purine metabolism; IMP biosynthesis via de novo pathway; 5-formamido-1-(5-phospho-D-ribosyl)imidazole-4-carboxamide from 5-amino-1-(5-phospho-D-ribosyl)imidazole-4-carboxamide (formate route): step 1/1. Functionally, catalyzes the ATP- and formate-dependent formylation of 5-aminoimidazole-4-carboxamide-1-beta-d-ribofuranosyl 5'-monophosphate (AICAR) to 5-formaminoimidazole-4-carboxamide-1-beta-d-ribofuranosyl 5'-monophosphate (FAICAR) in the absence of folates. The chain is 5-formaminoimidazole-4-carboxamide-1-(beta)-D-ribofuranosyl 5'-monophosphate synthetase from Pyrobaculum arsenaticum (strain DSM 13514 / JCM 11321 / PZ6).